The following is a 312-amino-acid chain: Carbamate kinase 2 (312 aa).

It belongs to the carbamate kinase family.

The protein resides in the cytoplasm. It catalyses the reaction hydrogencarbonate + NH4(+) + ATP = carbamoyl phosphate + ADP + H2O + H(+). Its pathway is metabolic intermediate metabolism; carbamoyl phosphate degradation; CO(2) and NH(3) from carbamoyl phosphate: step 1/1. In Enterococcus faecalis (strain ATCC 700802 / V583), this protein is Carbamate kinase 2 (arcC2).